Reading from the N-terminus, the 242-residue chain is Large ribosomal subunit protein uL1 (242 aa).

It belongs to the universal ribosomal protein uL1 family. In terms of assembly, part of the 50S ribosomal subunit.

In terms of biological role, binds directly to 23S rRNA. The L1 stalk is quite mobile in the ribosome, and is involved in E site tRNA release. Functionally, protein L1 is also a translational repressor protein, it controls the translation of the L11 operon by binding to its mRNA. This is Large ribosomal subunit protein uL1 from Persephonella marina (strain DSM 14350 / EX-H1).